We begin with the raw amino-acid sequence, 345 residues long: Heat-inducible transcription repressor HrcA (345 aa).

It belongs to the HrcA family.

In terms of biological role, negative regulator of class I heat shock genes (grpE-dnaK-dnaJ and groELS operons). Prevents heat-shock induction of these operons. This Tetragenococcus halophilus (Pediococcus halophilus) protein is Heat-inducible transcription repressor HrcA.